Consider the following 337-residue polypeptide: Follistatin (337 aa).

The first 22 residues, 1 to 22 (PGGVCLLLLLLCQFMEDRSAQA), serve as a signal peptide directing secretion. The TB domain maps to 23 to 96 (GNCWLRQAKN…TCENVDCGPG (74 aa)). Cystine bridges form between cysteine 25-cysteine 48, cysteine 35-cysteine 81, cysteine 49-cysteine 84, cysteine 88-cysteine 99, cysteine 93-cysteine 109, cysteine 111-cysteine 143, cysteine 115-cysteine 136, cysteine 125-cysteine 157, cysteine 161-cysteine 172, cysteine 166-cysteine 182, cysteine 185-cysteine 218, cysteine 189-cysteine 211, cysteine 200-cysteine 232, cysteine 238-cysteine 249, cysteine 243-cysteine 260, cysteine 263-cysteine 295, cysteine 267-cysteine 288, and cysteine 277-cysteine 309. Residues 87 to 110 (TCENVDCGPGKKCRMNKKNKPRCV) form the Follistatin-like 1 domain. In terms of domain architecture, Kazal-like 1 spans 105–159 (NKPRCVCAPDCSNITWKGPVCGLDGKTYRNECALLKARCKEQPELEVQYQGKCKK). The N-linked (GlcNAc...) asparagine glycan is linked to asparagine 117. The 24-residue stretch at 160–183 (TCRDVFCPGSSTCVVDQTNNAYCV) folds into the Follistatin-like 2 domain. Positions 179 to 234 (NAYCVTCNRICPEPTSSEQYLCGNDGVTYPSACHLRKATCLLGRSIGLAYEGKCIK) constitute a Kazal-like 2 domain. The Follistatin-like 3 domain occupies 237 to 261 (SCEDIQCTGGKKCLWDFKVGRGRCS). The region spanning 254 to 311 (KVGRGRCSLCGELCPESKSEEPVCASDNATYASECAMKEAACSSGVLLEVKHSGSCNS) is the Kazal-like 3 domain. An N-linked (GlcNAc...) asparagine glycan is attached at asparagine 281. The tract at residues 309 to 337 (CNSISEDTEDEEEDEDQDYSFPISSILEW) is disordered. Positions 314–326 (EDTEDEEEDEDQD) are enriched in acidic residues.

Monomer.

It localises to the secreted. Its function is as follows. Binds directly to activin and functions as an activin antagonist. Specific inhibitor of the biosynthesis and secretion of pituitary follicle stimulating hormone (FSH). This Ovis aries (Sheep) protein is Follistatin.